We begin with the raw amino-acid sequence, 200 residues long: Dephospho-CoA kinase (200 aa).

Positions 4–200 (VIGLTGGIAS…AILKKWNIID (197 aa)) constitute a DPCK domain. 12-17 (ASGKST) lines the ATP pocket.

This sequence belongs to the CoaE family.

It is found in the cytoplasm. It catalyses the reaction 3'-dephospho-CoA + ATP = ADP + CoA + H(+). It participates in cofactor biosynthesis; coenzyme A biosynthesis; CoA from (R)-pantothenate: step 5/5. Catalyzes the phosphorylation of the 3'-hydroxyl group of dephosphocoenzyme A to form coenzyme A. This is Dephospho-CoA kinase from Bacillus thuringiensis subsp. konkukian (strain 97-27).